A 771-amino-acid chain; its full sequence is Polyribonucleotide nucleotidyltransferase (771 aa).

Mg(2+) contacts are provided by D487 and D493. The 60-residue stretch at 554–613 folds into the KH domain; the sequence is PRIETMQIDKAKIRDVIGTGGKVIREIVATTGAKVDIDDEGLIKISSSDLDQIEAARKWI. The S1 motif domain occupies 623 to 691; the sequence is GKIYDGKVVN…PRGKVRLSMR (69 aa). Residues 696–771 are disordered; that stretch reads ETGAELEDTR…QGHVPDFLKD (76 aa). Positions 702 to 771 are enriched in basic and acidic residues; the sequence is EDTRPAREPR…QGHVPDFLKD (70 aa).

The protein belongs to the polyribonucleotide nucleotidyltransferase family. Requires Mg(2+) as cofactor.

It is found in the cytoplasm. The enzyme catalyses RNA(n+1) + phosphate = RNA(n) + a ribonucleoside 5'-diphosphate. Functionally, involved in mRNA degradation. Catalyzes the phosphorolysis of single-stranded polyribonucleotides processively in the 3'- to 5'-direction. The protein is Polyribonucleotide nucleotidyltransferase of Sphingopyxis alaskensis (strain DSM 13593 / LMG 18877 / RB2256) (Sphingomonas alaskensis).